Here is a 220-residue protein sequence, read N- to C-terminus: 7-cyano-7-deazaguanine synthase (220 aa).

ATP is bound at residue 11–21; it reads VSGGMDSVTLM. Residues Cys186, Cys194, Cys197, and Cys200 each contribute to the Zn(2+) site.

This sequence belongs to the QueC family. Zn(2+) serves as cofactor.

The catalysed reaction is 7-carboxy-7-deazaguanine + NH4(+) + ATP = 7-cyano-7-deazaguanine + ADP + phosphate + H2O + H(+). It participates in purine metabolism; 7-cyano-7-deazaguanine biosynthesis. In terms of biological role, catalyzes the ATP-dependent conversion of 7-carboxy-7-deazaguanine (CDG) to 7-cyano-7-deazaguanine (preQ(0)). The chain is 7-cyano-7-deazaguanine synthase from Porphyromonas gingivalis (strain ATCC BAA-308 / W83).